Consider the following 421-residue polypeptide: Ribulose bisphosphate carboxylase large chain (421 aa).

Substrate is bound by residues Asn-68 and Thr-118. The Proton acceptor role is filled by Lys-120. Lys-122 contacts substrate. Mg(2+) is bound by residues Lys-146, Asp-148, and Glu-149. Lys-146 is subject to N6-carboxylysine. His-239 (proton acceptor) is an active-site residue. Substrate-binding residues include Arg-240, His-272, and Ser-324.

This sequence belongs to the RuBisCO large chain family. Type I subfamily. As to quaternary structure, heterohexadecamer of 8 large chains and 8 small chains; disulfide-linked. The disulfide link is formed within the large subunit homodimers. Requires Mg(2+) as cofactor. In terms of processing, the disulfide bond which can form in the large chain dimeric partners within the hexadecamer appears to be associated with oxidative stress and protein turnover.

It localises to the plastid. The protein resides in the chloroplast. The catalysed reaction is 2 (2R)-3-phosphoglycerate + 2 H(+) = D-ribulose 1,5-bisphosphate + CO2 + H2O. The enzyme catalyses D-ribulose 1,5-bisphosphate + O2 = 2-phosphoglycolate + (2R)-3-phosphoglycerate + 2 H(+). Functionally, ruBisCO catalyzes two reactions: the carboxylation of D-ribulose 1,5-bisphosphate, the primary event in carbon dioxide fixation, as well as the oxidative fragmentation of the pentose substrate in the photorespiration process. Both reactions occur simultaneously and in competition at the same active site. In Aegilops crassa (Persian goatgrass), this protein is Ribulose bisphosphate carboxylase large chain (rbcL).